Consider the following 801-residue polypeptide: tRNA(Met) cytidine acetyltransferase TmcA (801 aa).

ATP contacts are provided by residues glutamine 228, 256 to 265 (GRGKSSAVGL), and arginine 412. Residues 457–637 (EELFLKNEEE…YTVIVVKPLS (181 aa)) form the N-acetyltransferase domain. Acetyl-CoA is bound by residues 562–564 (IAT), 569–575 (MGKGLGS), and glutamate 602.

Belongs to the RNA cytidine acetyltransferase family. TmcA subfamily.

It is found in the cytoplasm. It catalyses the reaction cytidine(34) in elongator tRNA(Met) + acetyl-CoA + ATP + H2O = N(4)-acetylcytidine(34) in elongator tRNA(Met) + ADP + phosphate + CoA + H(+). In terms of biological role, catalyzes the formation of N(4)-acetylcytidine (ac(4)C) at the wobble position of tRNA(Met), by using acetyl-CoA as an acetyl donor and ATP (or GTP). The protein is tRNA(Met) cytidine acetyltransferase TmcA of Thermofilum pendens (strain DSM 2475 / Hrk 5).